Reading from the N-terminus, the 210-residue chain is MRVKICGITQPQQSVAIASLGATALGFICVPSSPRYVTAAQIWAAVAPLPKNIDKIGVFANSSIAEIKQTVIDCGLTGVQLHGDETPEFCDQLRRSLPQVEILKALRVRSLEHLEQAIIYTQYINTLLLDAYHPQQLGGTGQTLDWQMLHKFHPSCPWLLAGGLTPDNILEALSQLNPDGIDLSSGVERKPGDKDLDKVALLFEKLGSRN.

Belongs to the TrpF family.

It catalyses the reaction N-(5-phospho-beta-D-ribosyl)anthranilate = 1-(2-carboxyphenylamino)-1-deoxy-D-ribulose 5-phosphate. The protein operates within amino-acid biosynthesis; L-tryptophan biosynthesis; L-tryptophan from chorismate: step 3/5. This chain is N-(5'-phosphoribosyl)anthranilate isomerase, found in Trichormus variabilis (strain ATCC 29413 / PCC 7937) (Anabaena variabilis).